A 160-amino-acid polypeptide reads, in one-letter code: Endoribonuclease YbeY (160 aa).

Positions 123, 127, and 133 each coordinate Zn(2+).

Belongs to the endoribonuclease YbeY family. Zn(2+) serves as cofactor.

It localises to the cytoplasm. In terms of biological role, single strand-specific metallo-endoribonuclease involved in late-stage 70S ribosome quality control and in maturation of the 3' terminus of the 16S rRNA. This chain is Endoribonuclease YbeY, found in Roseiflexus sp. (strain RS-1).